The chain runs to 197 residues: UPF0725 protein At5g41640 (197 aa).

It belongs to the UPF0725 (EMB2204) family.

This chain is UPF0725 protein At5g41640, found in Arabidopsis thaliana (Mouse-ear cress).